Consider the following 64-residue polypeptide: Temporin-ALg (64 aa).

Residues 1 to 22 form the signal peptide; that stretch reads MFTLKKSLLLLFFLGTINLSLC. Positions 23–46 are excised as a propeptide; the sequence is EQERNAEEERRDDLGERQAEVEKR. Residue L62 is modified to Leucine amide.

This sequence belongs to the frog skin active peptide (FSAP) family. Temporin subfamily. Expressed by the skin glands.

Its subcellular location is the secreted. In terms of biological role, antimicrobial peptide with activity against Gram-positive and Gram-negative bacteria and against fungi. Has been tested against S.aureus (MIC=2.5 ug/mL), B.pumilus (MIC=2.5 ug/mL), B.cereus (MIC=30.0 ug/mL), E.coli (MIC=5.0 ug/mL), B.dysenteriae (MIC=10.0 ug/mL), A.cacoaceticus (MIC=30.0 ug/mL), P.aeruginosa (MIC=7.5 ug/mL) and C.albicans (MIC=1.25 ug/mL). Also shows a weak hemolytic activity. The sequence is that of Temporin-ALg from Amolops loloensis (Lolokou Sucker Frog).